The chain runs to 89 residues: MEQTVPVRGRKKSWTGKVVSDKMDKACVIAVERRVQHPVYKKYFKKTTRLMVHDENNEAGVGDLVRVVECRPLSKRKSCRLAEIVEKAK.

Belongs to the universal ribosomal protein uS17 family. As to quaternary structure, part of the 30S ribosomal subunit.

Its function is as follows. One of the primary rRNA binding proteins, it binds specifically to the 5'-end of 16S ribosomal RNA. This Chlorobium chlorochromatii (strain CaD3) protein is Small ribosomal subunit protein uS17.